The chain runs to 658 residues: NADH-ubiquinone oxidoreductase chain 5 (658 aa).

The next 17 helical transmembrane spans lie at 4-23, 30-52, 81-103, 112-129, 133-155, 168-190, 200-222, 243-262, 272-294, 301-319, 329-351, 364-386, 409-431, 452-471, 505-527, 607-629, and 639-656; these read TLIV…GRKI, IITC…EVGI, LTVS…SISY, RFFS…ILVT, YLLM…NFWF, LLTN…WSFG, LAPY…GATA, VSAL…LLMR, TVLI…IGLF, VIAY…GIGL, LVNH…HSVA, PFLP…VPFM, IVYF…VLYL, LFLN…FGFL, VPVL…SILY, LSTG…YIST, and LLIL…NKLL.

It belongs to the complex I subunit 5 family.

The protein resides in the mitochondrion inner membrane. It carries out the reaction a ubiquinone + NADH + 5 H(+)(in) = a ubiquinol + NAD(+) + 4 H(+)(out). In terms of biological role, core subunit of the mitochondrial membrane respiratory chain NADH dehydrogenase (Complex I) that is believed to belong to the minimal assembly required for catalysis. Complex I functions in the transfer of electrons from NADH to the respiratory chain. The immediate electron acceptor for the enzyme is believed to be ubiquinone. The polypeptide is NADH-ubiquinone oxidoreductase chain 5 (nad5) (Talaromyces marneffei (Penicillium marneffei)).